The sequence spans 154 residues: Nucleoside diphosphate kinase A2 (154 aa).

ATP contacts are provided by lysine 13, phenylalanine 61, arginine 89, threonine 95, arginine 106, and asparagine 116. The active-site Pros-phosphohistidine intermediate is the histidine 119.

The protein belongs to the NDK family. It depends on Mg(2+) as a cofactor.

It localises to the cytoplasm. It catalyses the reaction a 2'-deoxyribonucleoside 5'-diphosphate + ATP = a 2'-deoxyribonucleoside 5'-triphosphate + ADP. The catalysed reaction is a ribonucleoside 5'-diphosphate + ATP = a ribonucleoside 5'-triphosphate + ADP. Its function is as follows. Major role in the synthesis of nucleoside triphosphates other than ATP. The ATP gamma phosphate is transferred to the NDP beta phosphate via a ping-pong mechanism, using a phosphorylated active-site intermediate. The polypeptide is Nucleoside diphosphate kinase A2 (Xenopus laevis (African clawed frog)).